Here is a 121-residue protein sequence, read N- to C-terminus: Ragulator complex protein LAMTOR4 homolog (121 aa).

The tract at residues 91–121 (TQNGATTSSSSSTSYNDAAEGNNISSSTVLA) is disordered. The span at 112-121 (NNISSSTVLA) shows a compositional bias: polar residues.

This sequence belongs to the LAMTOR4 family. Part of the Ragulator complex.

The protein localises to the lysosome. Its function is as follows. Regulator of the TOR pathway, a signaling cascade that promotes cell growth in response to growth factors, energy levels, and amino acids. As part of the Ragulator complex, may activate the TOR signaling cascade in response to amino acids. This Drosophila pseudoobscura pseudoobscura (Fruit fly) protein is Ragulator complex protein LAMTOR4 homolog.